Reading from the N-terminus, the 480-residue chain is Speriolin (480 aa).

Residues 1–76 (MSLLTSYEGL…HQGVFLPPAS (76 aa)) form a necessary for targeting to centrosomes region. Residues 2–45 (SLLTSYEGLRHQIERLVRENEELKKLVRLIRENQELKSAIKTQA) adopt a coiled-coil conformation. 2 disordered regions span residues 252-297 (INNI…SRVM) and 305-324 (VEME…DNPR).

Belongs to the speriolin family. As to quaternary structure, found in a complex with CDC20, CDC27 and TUBG1. Interacts with CDC20. As to expression, expressed in testis. Expressed in pachyten spermatocytes, spermatids and epididymal sperm (at protein level).

It localises to the cytoplasm. Its subcellular location is the cytoskeleton. The protein resides in the microtubule organizing center. The protein localises to the centrosome. This chain is Speriolin (Spatc1), found in Mus musculus (Mouse).